We begin with the raw amino-acid sequence, 275 residues long: NH(3)-dependent NAD(+) synthetase (275 aa).

Residue 43–50 participates in ATP binding; that stretch reads GISGGVDS. Asp49 lines the Mg(2+) pocket. Residue Arg145 participates in deamido-NAD(+) binding. Thr165 contacts ATP. Glu170 contributes to the Mg(2+) binding site. Deamido-NAD(+) is bound by residues Lys178 and Asp185. ATP-binding residues include Lys194 and Thr216. 265–266 provides a ligand contact to deamido-NAD(+); sequence HK.

The protein belongs to the NAD synthetase family. As to quaternary structure, homodimer.

It catalyses the reaction deamido-NAD(+) + NH4(+) + ATP = AMP + diphosphate + NAD(+) + H(+). It participates in cofactor biosynthesis; NAD(+) biosynthesis; NAD(+) from deamido-NAD(+) (ammonia route): step 1/1. Its function is as follows. Catalyzes the ATP-dependent amidation of deamido-NAD to form NAD. Uses ammonia as a nitrogen source. The protein is NH(3)-dependent NAD(+) synthetase of Shewanella denitrificans (strain OS217 / ATCC BAA-1090 / DSM 15013).